The chain runs to 247 residues: Adenosylcobinamide-GDP ribazoletransferase (247 aa).

Transmembrane regions (helical) follow at residues I34–L54, C59–F79, G113–L133, M138–Y158, V171–V191, and V194–I214.

It belongs to the CobS family. The cofactor is Mg(2+).

It localises to the cell inner membrane. It catalyses the reaction alpha-ribazole + adenosylcob(III)inamide-GDP = adenosylcob(III)alamin + GMP + H(+). The catalysed reaction is alpha-ribazole 5'-phosphate + adenosylcob(III)inamide-GDP = adenosylcob(III)alamin 5'-phosphate + GMP + H(+). Its pathway is cofactor biosynthesis; adenosylcobalamin biosynthesis; adenosylcobalamin from cob(II)yrinate a,c-diamide: step 7/7. Functionally, joins adenosylcobinamide-GDP and alpha-ribazole to generate adenosylcobalamin (Ado-cobalamin). Also synthesizes adenosylcobalamin 5'-phosphate from adenosylcobinamide-GDP and alpha-ribazole 5'-phosphate. This is Adenosylcobinamide-GDP ribazoletransferase from Salmonella paratyphi A (strain ATCC 9150 / SARB42).